Consider the following 250-residue polypeptide: Leucyl/phenylalanyl-tRNA--protein transferase (250 aa).

This sequence belongs to the L/F-transferase family.

It localises to the cytoplasm. The catalysed reaction is N-terminal L-lysyl-[protein] + L-leucyl-tRNA(Leu) = N-terminal L-leucyl-L-lysyl-[protein] + tRNA(Leu) + H(+). It catalyses the reaction N-terminal L-arginyl-[protein] + L-leucyl-tRNA(Leu) = N-terminal L-leucyl-L-arginyl-[protein] + tRNA(Leu) + H(+). It carries out the reaction L-phenylalanyl-tRNA(Phe) + an N-terminal L-alpha-aminoacyl-[protein] = an N-terminal L-phenylalanyl-L-alpha-aminoacyl-[protein] + tRNA(Phe). Functionally, functions in the N-end rule pathway of protein degradation where it conjugates Leu, Phe and, less efficiently, Met from aminoacyl-tRNAs to the N-termini of proteins containing an N-terminal arginine or lysine. In Cupriavidus taiwanensis (strain DSM 17343 / BCRC 17206 / CCUG 44338 / CIP 107171 / LMG 19424 / R1) (Ralstonia taiwanensis (strain LMG 19424)), this protein is Leucyl/phenylalanyl-tRNA--protein transferase.